Consider the following 407-residue polypeptide: Peptidase T (407 aa).

A Zn(2+)-binding site is contributed by His82. Asp84 is a catalytic residue. Residue Asp143 coordinates Zn(2+). Residue Glu177 is the Proton acceptor of the active site. Residues Glu178, Asp200, and His382 each coordinate Zn(2+).

This sequence belongs to the peptidase M20B family. Requires Zn(2+) as cofactor.

It localises to the cytoplasm. It carries out the reaction Release of the N-terminal residue from a tripeptide.. Functionally, cleaves the N-terminal amino acid of tripeptides. In Streptococcus thermophilus (strain ATCC BAA-491 / LMD-9), this protein is Peptidase T.